The following is a 512-amino-acid chain: Flavonoid 3'-monooxygenase (512 aa).

Residues 1–21 form a helical membrane-spanning segment; sequence MEILSLILYTVIFSFLLQFIL. The Cytoplasmic segment spans residues 22-512; sequence RSFFRKRYPL…PRLEAQAYIG (491 aa). Cysteine 447 contributes to the heme binding site.

It belongs to the cytochrome P450 family. The cofactor is heme. High expression in petals and ovaries and to a lower extent in sepals, pedicels, anthers and stems. Not detected in leaves, style or roots.

It is found in the endoplasmic reticulum membrane. It carries out the reaction a 3'-unsubstituted flavone + reduced [NADPH--hemoprotein reductase] + O2 = a 3'-hydroxyflavone + oxidized [NADPH--hemoprotein reductase] + H2O + H(+). It participates in secondary metabolite biosynthesis; flavonoid biosynthesis. Its function is as follows. Catalyzes the 3'-hydroxylation of the flavonoid B-ring to the 3',4'-hydroxylated state. Convert naringenin to eriodictyol and dihydrokaempferol to dihydroquercetin. In Petunia hybrida (Petunia), this protein is Flavonoid 3'-monooxygenase (CYP75B2).